The chain runs to 362 residues: Ribosomal RNA large subunit methyltransferase M (362 aa).

Residues S194, 227–230 (CPGG), D246, D266, and D284 each bind S-adenosyl-L-methionine. The active-site Proton acceptor is the K313.

It belongs to the class I-like SAM-binding methyltransferase superfamily. RNA methyltransferase RlmE family. RlmM subfamily. In terms of assembly, monomer.

It localises to the cytoplasm. It carries out the reaction cytidine(2498) in 23S rRNA + S-adenosyl-L-methionine = 2'-O-methylcytidine(2498) in 23S rRNA + S-adenosyl-L-homocysteine + H(+). Catalyzes the 2'-O-methylation at nucleotide C2498 in 23S rRNA. The chain is Ribosomal RNA large subunit methyltransferase M from Aggregatibacter aphrophilus (strain NJ8700) (Haemophilus aphrophilus).